Reading from the N-terminus, the 254-residue chain is HLA class II histocompatibility antigen, DR alpha chain (254 aa).

The N-terminal stretch at 1–25 is a signal peptide; the sequence is MAISGVPVLGFFIIAVLMSAQESWA. The segment at 26 to 109 is alpha-1; sequence IKEEHVIIQA…KRSNYTPITN (84 aa). The Extracellular portion of the chain corresponds to 26 to 216; the sequence is IKEEHVIIQA…APSPLPETTE (191 aa). N-linked (GlcNAc...) asparagine glycosylation is found at Asn-103 and Asn-143. The tract at residues 110–203 is alpha-2; it reads VPPEVTVLTN…GLDEPLLKHW (94 aa). An Ig-like C1-type domain is found at 112–204; it reads PEVTVLTNSP…LDEPLLKHWE (93 aa). A disulfide bridge links Cys-132 with Cys-188. A connecting peptide region spans residues 204–216; the sequence is EFDAPSPLPETTE. The helical transmembrane segment at 217 to 239 threads the bilayer; the sequence is NVVCALGLTVGLVGIIIGTIFII. At 240–254 the chain is on the cytoplasmic side; that stretch reads KGLRKSNAAERRGPL. Residue Lys-244 forms a Glycyl lysine isopeptide (Lys-Gly) (interchain with G-Cter in ubiquitin) linkage.

Belongs to the MHC class II family. As to quaternary structure, heterotrimer that consists of an alpha chain HLA-DRA, a beta chain HLA-DRB and a peptide (peptide-MHCII). Newly synthesized alpha and beta chains forms a heterodimer (MHCII) that associates with the CD74/invariant chain (Ii) in the endoplasmic reticulum (ER). Ii is a trimer composed of three subunits and each subunit interacts with one MHCII dimer, blocking the peptide-binding cleft. As a result, MHCII molecules cannot bind peptides present in the ER. The complex of MHCII and CD74/Ii is transported in vesicles from ER to Golgi to lysosomes, where it encounters antigenic peptides generated via proteolysis of endocytosed antigens. MHCII dimers are dissociated from CD74/Ii by the combined action of proteolysis and HLA-DM. Lysosomal enzymes such as cathepsin, degrade CD74/Ii leaving a 24 amino acid remnant called class II-associated Ii or CLIP. Interacts (via the peptide binding cleft) with CLIP; this interaction inhibits antigen peptide binding before entry in the endosomal compartment. The displacement of CLIP and replacement by a high affinity peptide in lysosomes is performed by HLA-DM heterodimer. HLA-DM catalyzes CLIP dissociation from MHCII, stabilizes empty MHCII and mediates the selection of high affinity peptides. Interacts with HLA-DM heterodimer; this interaction is direct. Interacts (via alpha-1 domain) with TCR (via CDRs). Interacts (via alpha-2 domain) with CD4 (via Ig-like V-type domain); this interaction increases the affinity of TCR for peptide-MHCII. (Microbial infection) Interacts with Epstein-Barr virus BZLF2/gp42. In terms of assembly, (Microbial infection) Interacts with Staphylococcus aureus enterotoxin A/entA, enterotoxin B/entB, enterotoxin C1/entC1, enterotoxin D/entD, and enterotoxin H/entH. Ubiquitinated by MARCHF1 or MARCHF8 at Lys-244 leading to down-regulation of MHCII. When associated with ubiquitination of the beta chain at 'Lys-254', the down-regulation of MHCII may be highly effective. In terms of tissue distribution, expressed in professional APCs: macrophages, dendritic cells and B cells (at protein level). Expressed in thymic epithelial cells (at protein level).

Its subcellular location is the cell membrane. The protein resides in the endoplasmic reticulum membrane. It is found in the early endosome membrane. It localises to the late endosome membrane. The protein localises to the lysosome membrane. Its subcellular location is the autolysosome membrane. Functionally, an alpha chain of antigen-presenting major histocompatibility complex class II (MHCII) molecule. In complex with the beta chain HLA-DRB, displays antigenic peptides on professional antigen presenting cells (APCs) for recognition by alpha-beta T cell receptor (TCR) on HLA-DR-restricted CD4-positive T cells. This guides antigen-specific T-helper effector functions, both antibody-mediated immune response and macrophage activation, to ultimately eliminate the infectious agents and transformed cells. Typically presents extracellular peptide antigens of 10 to 30 amino acids that arise from proteolysis of endocytosed antigens in lysosomes. In the tumor microenvironment, presents antigenic peptides that are primarily generated in tumor-resident APCs likely via phagocytosis of apoptotic tumor cells or macropinocytosis of secreted tumor proteins. Presents peptides derived from intracellular proteins that are trapped in autolysosomes after macroautophagy, a mechanism especially relevant for T cell selection in the thymus and central immune tolerance. The selection of the immunodominant epitopes follows two processing modes: 'bind first, cut/trim later' for pathogen-derived antigenic peptides and 'cut first, bind later' for autoantigens/self-peptides. The anchor residue at position 1 of the peptide N-terminus, usually a large hydrophobic residue, is essential for high affinity interaction with MHCII molecules. The polypeptide is HLA class II histocompatibility antigen, DR alpha chain (HLA-DRA) (Homo sapiens (Human)).